Reading from the N-terminus, the 222-residue chain is Large ribosomal subunit protein uL1 (222 aa).

It belongs to the universal ribosomal protein uL1 family. In terms of assembly, part of the 50S ribosomal subunit.

Its function is as follows. Binds directly to 23S rRNA. Probably involved in E site tRNA release. Protein L1 is also a translational repressor protein, it controls the translation of its operon by binding to its mRNA. In Pyrobaculum islandicum (strain DSM 4184 / JCM 9189 / GEO3), this protein is Large ribosomal subunit protein uL1.